The primary structure comprises 159 residues: Probable carbonic anhydrase (159 aa).

Residues 33–35 and 48–49 contribute to the substrate site; these read RGD and QD. Residues histidine 54, histidine 71, and histidine 76 each coordinate Zn(2+).

This sequence belongs to the gamma-class carbonic anhydrase family. Zn(2+) serves as cofactor.

The enzyme catalyses hydrogencarbonate + H(+) = CO2 + H2O. In terms of biological role, probably reversibly hydrates carbon dioxide. This is Probable carbonic anhydrase from Methanocaldococcus jannaschii (strain ATCC 43067 / DSM 2661 / JAL-1 / JCM 10045 / NBRC 100440) (Methanococcus jannaschii).